Reading from the N-terminus, the 91-residue chain is uncharacterized protein (91 aa).

An N-terminal signal peptide occupies residues 1-21 (MKQLLASPSLQLVTYPASATA).

Belongs to the BhsA/McbA family.

It localises to the periplasm. This is an uncharacterized protein from Escherichia coli O157:H7.